The following is a 7094-amino-acid chain: Replicase polyprotein 1ab (7094 aa).

The 143-residue stretch at 54 to 196 (PENHVMVDCR…PWVMYLRKCG (143 aa)) folds into the CoV Nsp1 globular domain. The BetaCoV Nsp1 C-terminal domain maps to 216-246 (FKVEDAYDLVHDEPKGKFSKKAYALIRGYRG). Positions 250–519 (LLYVDQYGCD…LICKALYLDY (270 aa)) constitute a CoV Nsp2 N-terminal domain. Zn(2+) is bound by residues cysteine 392, cysteine 397, cysteine 413, and cysteine 416. Residues 392-416 (CEQDLCDFKGWVPGNMIDGFACTTC) form a C4 region. A CoV Nsp2 middle domain is found at 524–713 (CGNLHQRELL…AQAFRSVAKV (190 aa)). The region spanning 733-851 (RRRICLSGSK…LDQAWRVPCA (119 aa)) is the CoV Nsp2 C-terminal domain. Positions 853 to 966 (RCVTFKEQPT…LYCAFTAPED (114 aa)) constitute a Ubiquitin-like 1 domain. A compositionally biased stretch (acidic residues) spans 972–986 (ESGVEEDDVEGEETD). Positions 972-992 (ESGVEEDDVEGEETDLTVTSA) are disordered. One can recognise a Peptidase C16 1 domain in the interval 1036–1274 (DLESVIQDYE…IAQLYGSCIT (239 aa)). The active-site For PL1-PRO activity is the cysteine 1074. Zn(2+) contacts are provided by cysteine 1151, cysteine 1154, cysteine 1177, and cysteine 1179. The segment at 1151-1179 (CIKCDLALKLKGLDAMFFYGDVVSHVCKC) adopts a C4-type 1 zinc-finger fold. Residues histidine 1225 and aspartate 1236 each act as for PL1-PRO activity in the active site. Positions 1275–1435 (PNVCFVKGDI…LISKCQITAV (161 aa)) constitute a Macro domain. A DPUP domain is found at 1491 to 1563 (DDARTFVQSN…VAQIKALFLD (73 aa)). Residues 1562-1617 (LDKVDILLTVDGVNFTNRFVPVGESFGKSLGNVFCDGVNVTKHKCDINYKGKVFFQ) form the Ubiquitin-like 2 domain. The Peptidase C16 2 domain maps to 1631–1892 (SSFNFDQKEL…KIEYKPDLSQ (262 aa)). Residue cysteine 1671 is the For PL2-PRO activity of the active site. Residues cysteine 1749, cysteine 1751, cysteine 1783, and cysteine 1785 each coordinate Zn(2+). Residues 1749-1785 (CKCGVKQEQRTGVDAVMHFGTLSREDLEIGYTVDCSC) form a C4-type 2 zinc finger. Catalysis depends on for PL2-PRO activity residues histidine 1828 and aspartate 1842. In terms of domain architecture, Nucleic acid-binding spans 1906–2007 (IKAQFKTFEK…TYFNRPLLVD (102 aa)). In terms of domain architecture, G2M spans 2020-2169 (DDGGDISESD…ADNKVIYTTE (150 aa)). 3 consecutive transmembrane segments (helical) span residues 2138 to 2158 (ISAC…WIKI), 2199 to 2219 (ACII…NVIF), and 2221 to 2241 (DFYL…AQWI). The segment at 2138 to 2385 (ISACFNFIKW…ASFIKLFSLF (248 aa)) is HD1. The 3Ecto domain occupies 2235-2296 (GKIAQWIKNT…AIDVVQYEAD (62 aa)). 2 cysteine pairs are disulfide-bonded: cysteine 2251–cysteine 2275 and cysteine 2266–cysteine 2272. 3 helical membrane passes run 2313 to 2333 (LIVS…LISI), 2343 to 2363 (LFML…ANML), and 2365 to 2385 (AHVF…FSLF). The segment at 2383–2473 (SLFRHVAYGC…ELKRPIQPTD (91 aa)) is Y1. Positions 2383-2750 (SLFRHVAYGC…LTTPFSLKGG (368 aa)) constitute a CoV Nsp3 Y domain. Positions 2387, 2392, 2397, 2400, 2433, 2436, 2440, and 2443 each coordinate Zn(2+). The segment at 2387–2400 (HVAYGCSKSGCLFC) is ZF1. Positions 2433–2443 (CSKHQWNCIDC) are ZF2. Residues 2474–2566 (VAYHTVTDVK…MVDKNLITTA (93 aa)) are Y2. The segment at 2474–2750 (VAYHTVTDVK…LTTPFSLKGG (277 aa)) is coV-Y. The Y3 stretch occupies residues 2567–2649 (NTGTSVTETM…DSVMSAVSAG (83 aa)). Residues 2650–2750 (LELTDESCNN…LTTPFSLKGG (101 aa)) are Y4. 5 helical membrane passes run 2752–2772 (VFSY…IGLW), 3031–3051 (ASSI…YYLI), 3063–3083 (IVFV…VFQV), 3090–3110 (VYAI…SVIM), and 3115–3135 (LVMY…SVVV). The interval 2752 to 3135 (VFSYFVYVCF…FCLLYISVVV (384 aa)) is HD2. The Nsp4C domain occupies 3149-3246 (LGTSVRSDGT…TASVSTSFLQ (98 aa)). In terms of domain architecture, Peptidase C30 spans 3247 to 3549 (SGIVKMVNPT…YQQLAGIKLQ (303 aa)). Residues histidine 3287 and cysteine 3391 each act as for 3CL-PRO activity in the active site. 7 helical membrane passes run 3558–3578 (GIVC…TAFV), 3588–3608 (TNML…MLLV), 3615–3635 (LTMY…LVVY), 3657–3677 (TYTD…FVTL), 3684–3704 (LFSF…WYMG), 3711–3731 (ILLM…LSMA), and 3755–3775 (IVLV…GLFS). The segment at 3558–3775 (GIVCWIMAST…IISCYWGLFS (218 aa)) is HD3. The RdRp Nsp7 cofactor domain occupies 3837–3925 (SKLTDVKCAN…DYAKDNTVLQ (89 aa)). A RdRp Nsp8 cofactor domain is found at 3926–4122 (ALQSEFVNMA…HNEVSATALQ (197 aa)). One can recognise a Nsp9 ssRNA-binding domain in the interval 4123 to 4232 (NNELMPAKLK…GTISSTVRLQ (110 aa)). One can recognise an ExoN/MTase coactivator domain in the interval 4233-4370 (AGTATEYASN…CVSTDTTVQS (138 aa)). Positions 4306, 4309, 4315, 4322, 4348, 4351, 4359, and 4361 each coordinate Zn(2+). 2 zinc fingers span residues 4306-4322 (CIYC…DGLC) and 4348-4361 (CQVC…SCSC). A NiRAN domain is found at 4375-4630 (FLNRVRGTSV…DCELYVNNAY (256 aa)). Residues asparagine 4578 and aspartate 4587 each contribute to the Mn(2+) site. Residues 4631 to 4729 (RLFDLVQYDF…MNMDVDTHRY (99 aa)) enclose the Nsp12 Interface domain. The Zn(2+) site is built by histidine 4660, cysteine 4666, cysteine 4671, cysteine 4675, and cysteine 4852. Positions 4730-5297 (RLSLKDLLLY…NMYLRSAVMQ (568 aa)) constitute a Nsp12 RNA-dependent RNA polymerase domain. Residues 4732-4946 (SLKDLLLYAA…HQKCLKSIAA (215 aa)) form a rdRp Fingers N-ter region. The tract at residues 4947-4985 (TRGVPVVIGTTKFYGGWDDMLRRLIKDVDNPVLMGWDYP) is rdRp Palm N-ter. The RdRp catalytic domain maps to 4977–5139 (PVLMGWDYPK…CYNSDYASKG (163 aa)). The rdRp Fingers C-ter stretch occupies residues 4986–5044 (KCDRAMPNILRIVSSLVLARKHEACCSQSDRFYRLANEYAQVLSEIVMCGGCYYVKPGG). Zn(2+) contacts are provided by histidine 5007, cysteine 5010, and cysteine 5011. Residues 5045–5180 (TSSGDATTAF…NNGPHEFCSQ (136 aa)) form a rdRp Palm C-ter region. Active-site residues include serine 5124, aspartate 5125, and aspartate 5126. A rdRp Thumb region spans residues 5181 to 5297 (HTMLVKMDGD…NMYLRSAVMQ (117 aa)). A CV ZBD domain is found at 5298–5410 (SVGACVVCSS…DDFNRIASCK (113 aa)). 12 residues coordinate Zn(2+): cysteine 5302, cysteine 5305, cysteine 5313, cysteine 5316, cysteine 5323, cysteine 5326, histidine 5330, histidine 5336, cysteine 5347, cysteine 5352, cysteine 5369, and histidine 5372. One can recognise a (+)RNA virus helicase ATP-binding domain in the interval 5553–5734 (SVLETFQNNV…MCCLGPDIFL (182 aa)). Residue 5578-5585 (GPPGTGKS) coordinates ATP. Residues 5735-5904 (GTCYRCPKEI…VETRVQCSTN (170 aa)) form the (+)RNA virus helicase C-terminal domain. An ExoN domain is found at 5971–6186 (LFITKEEAVK…RCLAVYDCFC (216 aa)). Catalysis depends on residues aspartate 5989, glutamate 5991, and glutamate 6090. Zn(2+) contacts are provided by cysteine 6106, cysteine 6109, cysteine 6125, histidine 6128, histidine 6156, cysteine 6160, and histidine 6163. Residues histidine 6167 and aspartate 6172 contribute to the active site. Cysteine 6178 contacts Zn(2+). The N7-MTase domain maps to 6195–6421 (YPIISNELSI…NLWNTFTKLQ (227 aa)). 6230–6236 (DIGNPKA) provides a ligand contact to S-adenosyl-L-methionine. The interval 6308-6322 (CNGGSLYVNKHAFHT) is gpppA-binding. Zn(2+) contacts are provided by cysteine 6346, cysteine 6367, cysteine 6378, and histidine 6381. One can recognise a Nsp15 N-terminal oligomerization domain in the interval 6422-6482 (SLENVVYNLV…NVAVELFAKR (61 aa)). Positions 6483-6603 (SIRHHPELKL…FAVRKEGQDV (121 aa)) constitute an AV-Nsp11N/CoV-Nsp15M domain. Positions 6653–6792 (TCRTDMEKDF…NDEKVMTFYL (140 aa)) constitute a NendoU domain. Residues histidine 6683, histidine 6698, lysine 6738, lysine 6841, aspartate 6925, lysine 6965, and glutamate 6998 contribute to the active site. The Nidovirus-type SAM-dependent 2'-O-MTase domain maps to 6797–7091 (ASDWKPGYSM…KEVFVGDSMV (295 aa)).

Belongs to the coronaviruses polyprotein 1ab family. As to quaternary structure, interacts with host PHB and PHB2. Interacts with papain-like protease nsp3 and non-structural protein 6. In terms of assembly, monomer. Homodimer. Only the homodimer shows catalytic activity. As to quaternary structure, interacts with nsp8 and nsp12 to form the replication-transcription complex (RTC): nsp12, nsp7, two subunits of nsp8, and up to two subunits of nsp13. Interacts with nsp7, nsp13 and nsp12 to form the replication-transcription complex (RTC): nsp12, nsp7, two subunits of nsp8, and up to two subunits of nsp13. In terms of assembly, interacts with nsp12. As to quaternary structure, interacts with proofreading exoribonuclease nsp14 and 2'-O-methyltransferase nsp16; these interactions enhance nsp14 and nsp16 enzymatic activities. Interacts with nsp7 and nsp8 to form the replication-transcription complex (RTC): nsp12, nsp7, two subunits of nsp8, and up to two subunits of nsp13. Interacts with nsp9. In terms of assembly, interacts with nsp8 to form the replication-transcription complex (RTC): nsp12, nsp7, two subunits of nsp8, and up to two subunits of nsp13. Mn(2+) serves as cofactor. It depends on Mg(2+) as a cofactor. Post-translationally, specific enzymatic cleavages in vivo by its own proteases yield mature proteins. 3CL-PRO and PL-PRO proteinases are autocatalytically processed.

It is found in the host membrane. The protein resides in the host cytoplasm. The protein localises to the host perinuclear region. It localises to the host endoplasmic reticulum-Golgi intermediate compartment. It catalyses the reaction RNA(n) + a ribonucleoside 5'-triphosphate = RNA(n+1) + diphosphate. The enzyme catalyses ATP + H2O = ADP + phosphate + H(+). It carries out the reaction Thiol-dependent hydrolysis of ester, thioester, amide, peptide and isopeptide bonds formed by the C-terminal Gly of ubiquitin (a 76-residue protein attached to proteins as an intracellular targeting signal).. The catalysed reaction is a 5'-end (N(7)-methyl 5'-triphosphoguanosine)-ribonucleoside in mRNA + S-adenosyl-L-methionine = a 5'-end (N(7)-methyl 5'-triphosphoguanosine)-(2'-O-methyl-ribonucleoside) in mRNA + S-adenosyl-L-homocysteine + H(+). It catalyses the reaction uridylyl-uridylyl-ribonucleotide-RNA = a 3'-end uridylyl-2',3'-cyclophospho-uridine-RNA + a 5'-end dephospho-ribonucleoside-RNA. The enzyme catalyses a 5'-end diphospho-ribonucleoside in mRNA + GTP + H(+) = a 5'-end (5'-triphosphoguanosine)-ribonucleoside in mRNA + diphosphate. It carries out the reaction a 5'-end (5'-triphosphoguanosine)-ribonucleoside in mRNA + S-adenosyl-L-methionine = a 5'-end (N(7)-methyl 5'-triphosphoguanosine)-ribonucleoside in mRNA + S-adenosyl-L-homocysteine. Functionally, the replicase polyprotein of coronaviruses is a multifunctional protein: it contains the activities necessary for the transcription of negative stranded RNA, leader RNA, subgenomic mRNAs and progeny virion RNA as well as proteinases responsible for the cleavage of the polyprotein into functional products. Its function is as follows. Inhibits host translation by interacting with the 40S ribosomal subunit. The nsp1-40S ribosome complex further induces an endonucleolytic cleavage near the 5'UTR of host mRNAs, targeting them for degradation. Viral mRNAs are not susceptible to nsp1-mediated endonucleolytic RNA cleavage thanks to the presence of a 5'-end leader sequence and are therefore protected from degradation. By suppressing host gene expression, nsp1 facilitates efficient viral gene expression in infected cells and evasion from host immune response. May play a role in the modulation of host cell survival signaling pathway by interacting with host PHB and PHB2. Indeed, these two proteins play a role in maintaining the functional integrity of the mitochondria and protecting cells from various stresses. In terms of biological role, responsible for the cleavages located at the N-terminus of the replicase polyprotein. In addition, PL-PRO possesses a deubiquitinating/deISGylating activity and processes both 'Lys-48'- and 'Lys-63'-linked polyubiquitin chains from cellular substrates. Participates together with nsp4 in the assembly of virally-induced cytoplasmic double-membrane vesicles necessary for viral replication. Antagonizes innate immune induction of type I interferon by blocking the phosphorylation, dimerization and subsequent nuclear translocation of host IRF3. Also prevents host NF-kappa-B signaling. Functionally, participates in the assembly of virally-induced cytoplasmic double-membrane vesicles necessary for viral replication. Its function is as follows. Cleaves the C-terminus of replicase polyprotein at 11 sites. Recognizes substrates containing the core sequence [ILMVF]-Q-|-[SGACN]. Also able to bind an ADP-ribose-1''-phosphate (ADRP). Plays a role in the initial induction of autophagosomes from host endoplasmic reticulum. Later, limits the expansion of these phagosomes that are no longer able to deliver viral components to lysosomes. In terms of biological role, forms a hexadecamer with nsp8 (8 subunits of each) that may participate in viral replication by acting as a primase. Alternatively, may synthesize substantially longer products than oligonucleotide primers. Functionally, forms a hexadecamer with nsp7 (8 subunits of each) that may participate in viral replication by acting as a primase. Alternatively, may synthesize substantially longer products than oligonucleotide primers. Its function is as follows. Forms a primer, NSP9-pU, which is utilized by the polymerase for the initiation of RNA chains. Interacts with ribosome signal recognition particle RNA (SRP). Together with NSP8, suppress protein integration into the cell membrane, thereby disrupting host immune defenses. Plays a pivotal role in viral transcription by stimulating both nsp14 3'-5' exoribonuclease and nsp16 2'-O-methyltransferase activities. Therefore plays an essential role in viral mRNAs cap methylation. In terms of biological role, RNA-directed RNA polymerase that catalyzes the transcription of viral genomic and subgenomic RNAs. Acts in complex with nsp7 and nsp8 to transcribe both the minus and positive strands of genomic RNA. The kinase-like NiRAN domain of NSP12 attaches one or more nucleotides to the amino terminus of NSP9, forming a covalent RNA-protein intermediate that serves as transcription/replication primer. Subgenomic RNAs (sgRNAs) are formed by discontinuous transcription: The polymerase has the ability to pause at transcription-regulating sequences (TRS) and jump to the leader TRS, resulting in a major deletion. This creates a series of subgenomic RNAs that are replicated, transcribed and translated. In addition, Nsp12 is a subunit of the viral RNA capping enzyme that catalyzes the RNA guanylyltransferase reaction for genomic and sub-genomic RNAs. Subsequently, the NiRAN domain transfers RNA to GDP, and forms the core cap structure GpppA-RNA. Functionally, multi-functional protein with a zinc-binding domain in N-terminus displaying RNA and DNA duplex-unwinding activities with 5' to 3' polarity. Activity of helicase is dependent on magnesium. Its function is as follows. Plays a role in viral RNA synthesis through two distinct activities. The N7-guanine methyltransferase activity plays a role in the formation of the cap structure GpppA-RNA. The proofreading exoribonuclease reduces the sensitivity of the virus to RNA mutagens during replication. This activity acts on both ssRNA and dsRNA in a 3'-5' direction. Plays a role in viral transcription/replication and prevents the simultaneous activation of host cell dsRNA sensors, such as MDA5/IFIH1, OAS, and PKR. Acts by degrading the 5'-polyuridines generated during replication of the poly(A) region of viral genomic and subgenomic RNAs. Catalyzes a two-step reaction in which a 2'3'-cyclic phosphate (2'3'-cP) is first generated by 2'-O transesterification, which is then hydrolyzed to a 3'-phosphate (3'-P). If not degraded, poly(U) RNA would hybridize with poly(A) RNA tails and activate host dsRNA sensors. In terms of biological role, methyltransferase that mediates mRNA cap 2'-O-ribose methylation to the 5'-cap structure of viral mRNAs. N7-methyl guanosine cap is a prerequisite for binding of nsp16. Therefore plays an essential role in viral mRNAs cap methylation which is essential to evade immune system. The polypeptide is Replicase polyprotein 1ab (rep) (Bos taurus (Bovine)).